Consider the following 494-residue polypeptide: GTPase Der (494 aa).

2 consecutive EngA-type G domains span residues 3–166 and 207–380; these read PVIA…MDAE and IKLA…DCST. GTP-binding positions include 9-16, 56-60, 118-121, 213-220, 260-264, and 325-328; these read GRPNVGKS, DTGGI, NKTD, DTAGV, and NKWD. The region spanning 381–465 is the KH-like domain; the sequence is KRVGTSLLTR…PIRIQFKEGE (85 aa).

Belongs to the TRAFAC class TrmE-Era-EngA-EngB-Septin-like GTPase superfamily. EngA (Der) GTPase family. In terms of assembly, associates with the 50S ribosomal subunit.

GTPase that plays an essential role in the late steps of ribosome biogenesis. In Yersinia enterocolitica serotype O:8 / biotype 1B (strain NCTC 13174 / 8081), this protein is GTPase Der.